A 464-amino-acid polypeptide reads, in one-letter code: Glutamate--tRNA ligase (464 aa).

The 'HIGH' region motif lies at 8-18 (PSPTGYMHLGN). Zn(2+) contacts are provided by Cys-96, Cys-98, Cys-123, and His-125. Positions 240–244 (KLSKR) match the 'KMSKS' region motif. Lys-243 provides a ligand contact to ATP.

The protein belongs to the class-I aminoacyl-tRNA synthetase family. Glutamate--tRNA ligase type 1 subfamily. Monomer. Zn(2+) is required as a cofactor.

Its subcellular location is the cytoplasm. The catalysed reaction is tRNA(Glu) + L-glutamate + ATP = L-glutamyl-tRNA(Glu) + AMP + diphosphate. Its function is as follows. Catalyzes the attachment of glutamate to tRNA(Glu) in a two-step reaction: glutamate is first activated by ATP to form Glu-AMP and then transferred to the acceptor end of tRNA(Glu). In Hydrogenobaculum sp. (strain Y04AAS1), this protein is Glutamate--tRNA ligase.